A 151-amino-acid chain; its full sequence is 3-dehydroquinate dehydratase (151 aa).

The Proton acceptor role is filled by tyrosine 24. Substrate contacts are provided by asparagine 76, histidine 82, and aspartate 89. The active-site Proton donor is histidine 102. Residues 103 to 104 (LS) and arginine 113 contribute to the substrate site.

It belongs to the type-II 3-dehydroquinase family. In terms of assembly, homododecamer.

The enzyme catalyses 3-dehydroquinate = 3-dehydroshikimate + H2O. It participates in metabolic intermediate biosynthesis; chorismate biosynthesis; chorismate from D-erythrose 4-phosphate and phosphoenolpyruvate: step 3/7. Functionally, catalyzes a trans-dehydration via an enolate intermediate. This Acinetobacter baumannii (strain ATCC 17978 / DSM 105126 / CIP 53.77 / LMG 1025 / NCDC KC755 / 5377) protein is 3-dehydroquinate dehydratase.